The sequence spans 79 residues: Sec-independent protein translocase protein TatA (79 aa).

The helical transmembrane segment at M1–F21 threads the bilayer. The disordered stretch occupies residues E48–S79. Over residues K66–S79 the composition is skewed to basic and acidic residues.

It belongs to the TatA/E family. In terms of assembly, the Tat system comprises two distinct complexes: a TatABC complex, containing multiple copies of TatA, TatB and TatC subunits, and a separate TatA complex, containing only TatA subunits. Substrates initially bind to the TatABC complex, which probably triggers association of the separate TatA complex to form the active translocon.

Its subcellular location is the cell inner membrane. In terms of biological role, part of the twin-arginine translocation (Tat) system that transports large folded proteins containing a characteristic twin-arginine motif in their signal peptide across membranes. TatA could form the protein-conducting channel of the Tat system. This is Sec-independent protein translocase protein TatA from Helicobacter pylori (strain ATCC 700392 / 26695) (Campylobacter pylori).